Consider the following 630-residue polypeptide: Probable potassium transport system protein Kup (630 aa).

A run of 12 helical transmembrane segments spans residues 17 to 37 (LAIA…LYSL), 51 to 71 (PSAI…VVGI), 105 to 125 (ITGL…GDAV), 144 to 164 (PQLS…LFWI), 175 to 195 (LFGP…VYHI), 218 to 238 (VLLA…AEAL), 255 to 275 (YVLV…LLLL), 283 to 303 (PFFL…STVA), 344 to 364 (IYVP…VIGF), 374 to 394 (YGIA…VVMV), 402 to 422 (LLVA…FGAN), and 428 to 448 (QGGW…MTWY).

This sequence belongs to the HAK/KUP transporter (TC 2.A.72) family.

It is found in the cell inner membrane. It carries out the reaction K(+)(in) + H(+)(in) = K(+)(out) + H(+)(out). In terms of biological role, transport of potassium into the cell. Likely operates as a K(+):H(+) symporter. In Burkholderia thailandensis (strain ATCC 700388 / DSM 13276 / CCUG 48851 / CIP 106301 / E264), this protein is Probable potassium transport system protein Kup.